The following is an 88-amino-acid chain: Exodeoxyribonuclease 7 small subunit (88 aa).

This sequence belongs to the XseB family. In terms of assembly, heterooligomer composed of large and small subunits.

Its subcellular location is the cytoplasm. The enzyme catalyses Exonucleolytic cleavage in either 5'- to 3'- or 3'- to 5'-direction to yield nucleoside 5'-phosphates.. In terms of biological role, bidirectionally degrades single-stranded DNA into large acid-insoluble oligonucleotides, which are then degraded further into small acid-soluble oligonucleotides. The chain is Exodeoxyribonuclease 7 small subunit from Bordetella bronchiseptica (strain ATCC BAA-588 / NCTC 13252 / RB50) (Alcaligenes bronchisepticus).